Reading from the N-terminus, the 276-residue chain is Bis(5'-nucleosyl)-tetraphosphatase, symmetrical (276 aa).

This sequence belongs to the Ap4A hydrolase family.

The catalysed reaction is P(1),P(4)-bis(5'-adenosyl) tetraphosphate + H2O = 2 ADP + 2 H(+). Functionally, hydrolyzes diadenosine 5',5'''-P1,P4-tetraphosphate to yield ADP. The protein is Bis(5'-nucleosyl)-tetraphosphatase, symmetrical of Legionella pneumophila (strain Corby).